The primary structure comprises 953 residues: Zinc finger CCCH domain-containing protein 18 (953 aa).

Met-1 is modified (N-acetylmethionine). The segment covering 1 to 14 (MDVAESPERDPHSP) has biased composition (basic and acidic residues). Disordered regions lie at residues 1-222 (MDVA…RPRP) and 391-928 (QYTE…LSRR). Ser-6 is modified (phosphoserine). Positions 15-26 (EDEEQPQGLSDD) are enriched in acidic residues. Residues Ser-34, Ser-46, Ser-53, Ser-59, Ser-67, Ser-74, Ser-78, Ser-83, and Ser-95 each carry the phosphoserine modification. The span at 60-72 (QEEEDNHSDEEDR) shows a compositional bias: acidic residues. A compositionally biased stretch (acidic residues) spans 97-106 (CEEEGDEGEE). Positions 105–134 (EEDRTSDLRDEASSVTRELDEHELDYDEEV) form a coiled coil. Over residues 107–124 (DRTSDLRDEASSVTRELD) the composition is skewed to basic and acidic residues. Thr-109 is subject to Phosphothreonine. 2 positions are modified to phosphoserine: Ser-110 and Ser-118. 2 stretches are compositionally biased toward acidic residues: residues 125–136 (EHELDYDEEVPE) and 143–158 (QEDE…DEEK). Positions 159–168 (GEGTPREEGK) are enriched in basic and acidic residues. Residue Thr-162 is modified to Phosphothreonine. 2 positions are modified to phosphoserine: Ser-173 and Ser-179. The span at 175-190 (GEKESLEAAKEKKKED) shows a compositional bias: basic and acidic residues. Acidic residues predominate over residues 191–207 (DDGEIDDGEIDDDDLEE). Over residues 208–217 (GEVKDPSDRK) the composition is skewed to basic and acidic residues. The segment at 219-245 (RPRPTCRFFMKGNCTWGMNCRFIHPGV) adopts a C3H1-type zinc-finger fold. Positions 396–482 (EPYHNYRERE…EKEREKEKGK (87 aa)) are enriched in basic and acidic residues. Residues 399–464 (HNYRERERER…RERAKRDEKD (66 aa)) adopt a coiled-coil conformation. Ser-487 carries the phosphoserine modification. Residue Lys-510 forms a Glycyl lysine isopeptide (Lys-Gly) (interchain with G-Cter in SUMO2) linkage. The span at 510–520 (KRADEWKDPWR) shows a compositional bias: basic and acidic residues. 3 positions are modified to phosphoserine: Ser-532, Ser-534, and Ser-536. A compositionally biased stretch (low complexity) spans 545–606 (SASSASASNS…SRSRSFSSSP (62 aa)). Residues Lys-622 and Lys-661 each participate in a glycyl lysine isopeptide (Lys-Gly) (interchain with G-Cter in SUMO2) cross-link. Basic and acidic residues predominate over residues 661–670 (KPGDPREARR). Low complexity-rich tracts occupy residues 692–725 (GSSY…SAHS) and 736–750 (ASPV…PAPA). Residues 760 to 774 (KKEDGVKEEKRKRDS) show a composition bias toward basic and acidic residues. Lys-766 is covalently cross-linked (Glycyl lysine isopeptide (Lys-Gly) (interchain with G-Cter in SUMO2)). Residues 778 to 798 (PPKSAKPPAGGKSSQQPSTPQ) are compositionally biased toward low complexity. Lys-814 bears the N6-acetyllysine mark. Residue Lys-817 forms a Glycyl lysine isopeptide (Lys-Gly) (interchain with G-Cter in SUMO2) linkage. Residues 824 to 841 (AADKGSRKRYEPSDKDRQ) show a composition bias toward basic and acidic residues. Phosphoserine occurs at positions 842, 852, 868, 893, and 896. The span at 893–906 (SPQSKSSSKVTSVP) shows a compositional bias: low complexity. Residue Lys-908 forms a Glycyl lysine isopeptide (Lys-Gly) (interchain with G-Cter in SUMO2) linkage. Over residues 916–925 (STKSGKASTL) the composition is skewed to polar residues. The stretch at 921–950 (KASTLSRREELLKQLKAVEDAIARKRAKIP) forms a coiled coil.

As to quaternary structure, interacts with ZFC3H1 in a RNase-insensitive manner.

It is found in the nucleus. The polypeptide is Zinc finger CCCH domain-containing protein 18 (Homo sapiens (Human)).